The primary structure comprises 163 residues: Succinate dehydrogenase assembly factor 2-A, mitochondrial (163 aa).

The N-terminal 23 residues, 1 to 23, are a transit peptide targeting the mitochondrion; it reads MLRQLRLTMDISGWIFLPWRRSM.

The protein belongs to the SDHAF2 family. In terms of assembly, interacts with the flavoprotein subunit within the SDH catalytic dimer.

The protein localises to the mitochondrion matrix. Its function is as follows. Plays an essential role in the assembly of succinate dehydrogenase (SDH), an enzyme complex (also referred to as respiratory complex II) that is a component of both the tricarboxylic acid (TCA) cycle and the mitochondrial electron transport chain, and which couples the oxidation of succinate to fumarate with the reduction of ubiquinone (coenzyme Q) to ubiquinol. Required for flavinylation (covalent attachment of FAD) of the flavoprotein subunit of the SDH catalytic dimer. The protein is Succinate dehydrogenase assembly factor 2-A, mitochondrial of Drosophila sechellia (Fruit fly).